The primary structure comprises 118 residues: Ribonuclease P protein component (118 aa).

It belongs to the RnpA family. As to quaternary structure, consists of a catalytic RNA component (M1 or rnpB) and a protein subunit.

It catalyses the reaction Endonucleolytic cleavage of RNA, removing 5'-extranucleotides from tRNA precursor.. Functionally, RNaseP catalyzes the removal of the 5'-leader sequence from pre-tRNA to produce the mature 5'-terminus. It can also cleave other RNA substrates such as 4.5S RNA. The protein component plays an auxiliary but essential role in vivo by binding to the 5'-leader sequence and broadening the substrate specificity of the ribozyme. The polypeptide is Ribonuclease P protein component (Shewanella oneidensis (strain ATCC 700550 / JCM 31522 / CIP 106686 / LMG 19005 / NCIMB 14063 / MR-1)).